The primary structure comprises 863 residues: Glycerol-3-phosphate acyltransferase (863 aa).

The tract at residues 1–29 (MPKKNSPLLPKETTTTQSSVDTSGSSNLT) is disordered. Over residues 12-29 (ETTTTQSSVDTSGSSNLT) the composition is skewed to polar residues. An HXXXXD motif motif is present at residues 343-348 (SHRSHI).

The protein belongs to the GPAT/DAPAT family.

The protein localises to the cell inner membrane. The catalysed reaction is sn-glycerol 3-phosphate + an acyl-CoA = a 1-acyl-sn-glycero-3-phosphate + CoA. Its pathway is phospholipid metabolism; CDP-diacylglycerol biosynthesis; CDP-diacylglycerol from sn-glycerol 3-phosphate: step 1/3. This chain is Glycerol-3-phosphate acyltransferase, found in Xylella fastidiosa (strain M12).